A 95-amino-acid chain; its full sequence is Large ribosomal subunit protein bL25 (95 aa).

This sequence belongs to the bacterial ribosomal protein bL25 family. As to quaternary structure, part of the 50S ribosomal subunit; part of the 5S rRNA/L5/L18/L25 subcomplex. Contacts the 5S rRNA. Binds to the 5S rRNA independently of L5 and L18.

Its function is as follows. This is one of the proteins that binds to the 5S RNA in the ribosome where it forms part of the central protuberance. This Shewanella sp. (strain ANA-3) protein is Large ribosomal subunit protein bL25.